A 383-amino-acid chain; its full sequence is 8-amino-7-oxononanoate synthase (383 aa).

The substrate site is built by Arg27 and Arg34. 114–115 (GY) is a binding site for pyridoxal 5'-phosphate. Position 139 (His139) interacts with substrate. Residues Ser187, 212 to 215 (DDAH), and 232 to 235 (TLSK) each bind pyridoxal 5'-phosphate. An N6-(pyridoxal phosphate)lysine modification is found at Lys235. Thr344 lines the substrate pocket.

This sequence belongs to the class-II pyridoxal-phosphate-dependent aminotransferase family. BioF subfamily. In terms of assembly, homodimer. Pyridoxal 5'-phosphate serves as cofactor.

The enzyme catalyses 6-carboxyhexanoyl-[ACP] + L-alanine + H(+) = (8S)-8-amino-7-oxononanoate + holo-[ACP] + CO2. It participates in cofactor biosynthesis; biotin biosynthesis. Catalyzes the decarboxylative condensation of pimeloyl-[acyl-carrier protein] and L-alanine to produce 8-amino-7-oxononanoate (AON), [acyl-carrier protein], and carbon dioxide. The sequence is that of 8-amino-7-oxononanoate synthase from Methylorubrum extorquens (strain PA1) (Methylobacterium extorquens).